A 309-amino-acid chain; its full sequence is MSEILIVPLKEKMSERTLWLTIVQMFYGTITVVFMLILLFLFQFSKKFSYSFYRILQLDLITNILCNLNSLFSVRFQNHLMFLPVLEFLENSIPGFLSISSRGKFLFFHLQFFTALSMNIHRISSVTHPVGHGEFWTKYFKLYYVILCGISIFFTSVLPLESHRIEMENGTLIEISNHSMTTWTLNIYAIYSSVYFIILLLVGIISIFYISRKVEQVSTRSREVARKLSLITLVYGFLYSGILLWSILMALNRYFQFCPPSFGYIFNMSLGISSDLITLSLPYILLIFDVGIRKLFCRKRRKVGAMNVP.

Helical transmembrane passes span 22–42 (IVQMFYGTITVVFMLILLFLF), 140–160 (FKLYYVILCGISIFFTSVLPL), 190–210 (IYSSVYFIILLLVGIISIFYI), 230–250 (LITLVYGFLYSGILLWSILMA), and 272–292 (ISSDLITLSLPYILLIFDVGI).

Belongs to the nematode receptor-like protein srg family.

It is found in the membrane. This is Serpentine receptor class gamma-47 (srg-47) from Caenorhabditis elegans.